The following is a 114-amino-acid chain: uncharacterized protein (114 aa).

In terms of biological role, may be associated with transposition functions of transposon Tn903. This is an uncharacterized protein from Escherichia coli.